We begin with the raw amino-acid sequence, 1052 residues long: Kruppel-like factor 18 (1052 aa).

3 consecutive C2H2-type zinc fingers follow at residues 964-988 (YVCTYEDCKMSYSKACHLRTHMRKH), 994-1018 (YVCDVEGCTWKFARSDELNRHKKRH), and 1024-1046 (YLCSICSKNFARSDHLKQHAKVH).

Belongs to the krueppel C2H2-type zinc-finger protein family.

Its subcellular location is the nucleus. In Homo sapiens (Human), this protein is Kruppel-like factor 18.